The chain runs to 353 residues: Quinolinate synthase (353 aa).

Positions 49 and 70 each coordinate iminosuccinate. Cys-115 provides a ligand contact to [4Fe-4S] cluster. Residues 141 to 143 and Ser-158 contribute to the iminosuccinate site; that span reads YAN. Cys-202 contacts [4Fe-4S] cluster. Residues 228–230 and Thr-245 contribute to the iminosuccinate site; that span reads HPE. Cys-299 provides a ligand contact to [4Fe-4S] cluster.

This sequence belongs to the quinolinate synthase family. Type 1 subfamily. The cofactor is [4Fe-4S] cluster.

Its subcellular location is the cytoplasm. It catalyses the reaction iminosuccinate + dihydroxyacetone phosphate = quinolinate + phosphate + 2 H2O + H(+). It functions in the pathway cofactor biosynthesis; NAD(+) biosynthesis; quinolinate from iminoaspartate: step 1/1. Its function is as follows. Catalyzes the condensation of iminoaspartate with dihydroxyacetone phosphate to form quinolinate. In Hahella chejuensis (strain KCTC 2396), this protein is Quinolinate synthase.